Reading from the N-terminus, the 541-residue chain is Carboxypeptidase Y homolog A (541 aa).

The N-terminal stretch at 1–17 (MKTFTAALLVGTALAAV) is a signal peptide. Residues 18–122 (PQQQPLQTQV…KLENYDLRVK (105 aa)) constitute a propeptide that is removed on maturation. 5 disulfides stabilise this stretch: Cys177/Cys416, Cys311/Cys325, Cys335/Cys358, Cys342/Cys351, and Cys380/Cys386. An N-linked (GlcNAc...) asparagine glycan is attached at Asn208. Ser264 is a catalytic residue. Asp455 is a catalytic residue. Residues Asn485, Asn491, and Asn506 are each glycosylated (N-linked (GlcNAc...) asparagine). Residue His517 is part of the active site.

It belongs to the peptidase S10 family.

It localises to the vacuole. It catalyses the reaction Release of a C-terminal amino acid with broad specificity.. Vacuolar carboxypeptidase involved in degradation of small peptides. Digests preferentially peptides containing an aliphatic or hydrophobic residue in P1' position, as well as methionine, leucine or phenylalanine in P1 position of ester substrate. The chain is Carboxypeptidase Y homolog A (cpyA) from Uncinocarpus reesii (strain UAMH 1704).